We begin with the raw amino-acid sequence, 336 residues long: Uroporphyrinogen decarboxylase (336 aa).

Residues 24-28 (RQVGR), Asp73, Tyr142, Ser197, and His312 each bind substrate.

Belongs to the uroporphyrinogen decarboxylase family. Homodimer.

Its subcellular location is the cytoplasm. The enzyme catalyses uroporphyrinogen III + 4 H(+) = coproporphyrinogen III + 4 CO2. The protein operates within porphyrin-containing compound metabolism; protoporphyrin-IX biosynthesis; coproporphyrinogen-III from 5-aminolevulinate: step 4/4. Its function is as follows. Catalyzes the decarboxylation of four acetate groups of uroporphyrinogen-III to yield coproporphyrinogen-III. This is Uroporphyrinogen decarboxylase from Chlamydia trachomatis serovar L2 (strain ATCC VR-902B / DSM 19102 / 434/Bu).